The primary structure comprises 421 residues: Enolase (421 aa).

Residue Q165 coordinates (2R)-2-phosphoglycerate. E207 acts as the Proton donor in catalysis. Positions 244, 285, and 312 each coordinate Mg(2+). Residues K337, R366, S367, and K388 each contribute to the (2R)-2-phosphoglycerate site. The Proton acceptor role is filled by K337.

The protein belongs to the enolase family. It depends on Mg(2+) as a cofactor.

It localises to the cytoplasm. Its subcellular location is the secreted. The protein resides in the cell surface. The catalysed reaction is (2R)-2-phosphoglycerate = phosphoenolpyruvate + H2O. It participates in carbohydrate degradation; glycolysis; pyruvate from D-glyceraldehyde 3-phosphate: step 4/5. Functionally, catalyzes the reversible conversion of 2-phosphoglycerate (2-PG) into phosphoenolpyruvate (PEP). It is essential for the degradation of carbohydrates via glycolysis. The chain is Enolase from Ehrlichia ruminantium (strain Welgevonden).